Reading from the N-terminus, the 650-residue chain is Chaperone protein DnaK (650 aa).

T200 is subject to Phosphothreonine; by autocatalysis. Over residues A611–A636 the composition is skewed to low complexity. Positions A611 to D650 are disordered.

Belongs to the heat shock protein 70 family.

In terms of biological role, acts as a chaperone. This chain is Chaperone protein DnaK, found in Burkholderia mallei (strain NCTC 10247).